The following is an 822-amino-acid chain: Serine/threonine-protein phosphatase 4 regulatory subunit 3 (822 aa).

The 100-residue stretch at Met1–Val100 folds into the WH1 domain. Positions Thr744 to Ser822 are disordered. The segment covering Ser761–Ser774 has biased composition (low complexity). The span at Tyr793–Lys808 shows a compositional bias: acidic residues.

The protein belongs to the SMEK family. In terms of assembly, serine/threonine-protein phosphatase 4 (PP4) occurs in different assemblies of the catalytic and one or more regulatory subunits.

Its function is as follows. Regulatory subunit of serine/threonine-protein phosphatase 4. The chain is Serine/threonine-protein phosphatase 4 regulatory subunit 3 (smek1) from Xenopus laevis (African clawed frog).